Here is a 172-residue protein sequence, read N- to C-terminus: Adenine phosphoribosyltransferase (172 aa).

The protein belongs to the purine/pyrimidine phosphoribosyltransferase family. In terms of assembly, homodimer.

The protein resides in the cytoplasm. It catalyses the reaction AMP + diphosphate = 5-phospho-alpha-D-ribose 1-diphosphate + adenine. It functions in the pathway purine metabolism; AMP biosynthesis via salvage pathway; AMP from adenine: step 1/1. Catalyzes a salvage reaction resulting in the formation of AMP, that is energically less costly than de novo synthesis. The sequence is that of Adenine phosphoribosyltransferase from Synechocystis sp. (strain ATCC 27184 / PCC 6803 / Kazusa).